A 294-amino-acid polypeptide reads, in one-letter code: Flagellum site-determining protein YlxH (294 aa).

Residue 35–42 (GKGGVGKS) coordinates ATP.

The protein belongs to the ParA family.

Its function is as follows. Involved in the placement and assembly of flagella. In Helicobacter pylori (strain ATCC 700392 / 26695) (Campylobacter pylori), this protein is Flagellum site-determining protein YlxH (ylxH).